Reading from the N-terminus, the 353-residue chain is Photosystem II D2 protein (353 aa).

The helical transmembrane segment at 41 to 61 (TAYLALGGWLTGTTFVTSWYT) threads the bilayer. Position 118 (His118) interacts with chlorophyll a. A helical transmembrane segment spans residues 125–141 (GFMLRQFEISRLVGIRP). Gln130 and Asn143 together coordinate pheophytin a. The helical transmembrane segment at 153–166 (VFVSVFLMYPLGQS) threads the bilayer. Residue His198 participates in chlorophyll a binding. Residues 208–228 (GALLCAIHGATVENTLYEDGE) form a helical membrane-spanning segment. Residues His215 and Phe262 each contribute to the a plastoquinone site. His215 is a binding site for Fe cation. His269 contacts Fe cation. A helical transmembrane segment spans residues 279–295 (GLWTSSIGIIGLALNLR).

This sequence belongs to the reaction center PufL/M/PsbA/D family. As to quaternary structure, PSII is composed of 1 copy each of membrane proteins PsbA, PsbB, PsbC, PsbD, PsbE, PsbF, PsbH, PsbI, PsbJ, PsbK, PsbL, PsbM, PsbT, PsbX, PsbY, PsbZ, Psb30/Ycf12, peripheral proteins PsbO, CyanoQ (PsbQ), PsbU, PsbV and a large number of cofactors. It forms dimeric complexes. The D1/D2 heterodimer binds P680, chlorophylls that are the primary electron donor of PSII, and subsequent electron acceptors. It shares a non-heme iron and each subunit binds pheophytin, quinone, additional chlorophylls, carotenoids and lipids. There is also a Cl(-1) ion associated with D1 and D2, which is required for oxygen evolution. The PSII complex binds additional chlorophylls, carotenoids and specific lipids. serves as cofactor.

It is found in the host cellular thylakoid membrane. It carries out the reaction 2 a plastoquinone + 4 hnu + 2 H2O = 2 a plastoquinol + O2. Functionally, photosystem II (PSII) is a light-driven water:plastoquinone oxidoreductase that uses light energy to abstract electrons from H(2)O, generating O(2) and a proton gradient subsequently used for ATP formation. It consists of a core antenna complex that captures photons, and an electron transfer chain that converts photonic excitation into a charge separation. The D1/D2 (PsbA/PsbD) reaction center heterodimer binds P680, the primary electron donor of PSII as well as several subsequent electron acceptors. D2 is needed for assembly of a stable PSII complex. The polypeptide is Photosystem II D2 protein (psbD) (Synechococcus phage S-PM2).